The chain runs to 263 residues: Indole-3-glycerol phosphate synthase (263 aa).

It belongs to the TrpC family.

It carries out the reaction 1-(2-carboxyphenylamino)-1-deoxy-D-ribulose 5-phosphate + H(+) = (1S,2R)-1-C-(indol-3-yl)glycerol 3-phosphate + CO2 + H2O. Its pathway is amino-acid biosynthesis; L-tryptophan biosynthesis; L-tryptophan from chorismate: step 4/5. This chain is Indole-3-glycerol phosphate synthase, found in Sulfurimonas denitrificans (strain ATCC 33889 / DSM 1251) (Thiomicrospira denitrificans (strain ATCC 33889 / DSM 1251)).